An 812-amino-acid polypeptide reads, in one-letter code: Lon protease (812 aa).

Residues 22–215 (YAVLPLRDIV…KALSFMEAEI (194 aa)) form the Lon N-terminal domain. Position 367-374 (367-374 (GPPGVGKT)) interacts with ATP. One can recognise a Lon proteolytic domain in the interval 602–783 (EDQVGVVTGL…GEVLKHALVR (182 aa)). Catalysis depends on residues Ser689 and Lys732. The interval 787–812 (PIEWTEQENPTAVPPVEDEAGASLAH) is disordered.

Belongs to the peptidase S16 family. Homohexamer. Organized in a ring with a central cavity.

The protein localises to the cytoplasm. It catalyses the reaction Hydrolysis of proteins in presence of ATP.. In terms of biological role, ATP-dependent serine protease that mediates the selective degradation of mutant and abnormal proteins as well as certain short-lived regulatory proteins. Required for cellular homeostasis and for survival from DNA damage and developmental changes induced by stress. Degrades polypeptides processively to yield small peptide fragments that are 5 to 10 amino acids long. Binds to DNA in a double-stranded, site-specific manner. The sequence is that of Lon protease from Brucella melitensis biotype 1 (strain ATCC 23456 / CCUG 17765 / NCTC 10094 / 16M).